Reading from the N-terminus, the 352-residue chain is Photosystem II protein D1 (352 aa).

Threonine 2 carries the post-translational modification N-acetylthreonine. At threonine 2 the chain carries Phosphothreonine. Transmembrane regions (helical) follow at residues 29–46, 118–133, and 142–156; these read YIGW…TATS, HFLL…EWEL, and WIAV…AATA. Histidine 118 serves as a coordination point for chlorophyll a. Tyrosine 126 contacts pheophytin a. Residues aspartate 170 and glutamate 189 each coordinate [CaMn4O5] cluster. A helical membrane pass occupies residues 197–218; sequence FHMLGVAGVFGGSLFSAMHGSL. Chlorophyll a is bound at residue histidine 198. A quinone is bound by residues histidine 215 and 264–265; that span reads SF. A Fe cation-binding site is contributed by histidine 215. Histidine 272 contacts Fe cation. Residues 274–288 form a helical membrane-spanning segment; that stretch reads FLAAWPVVGIWFTAL. Residues histidine 332, glutamate 333, aspartate 342, and alanine 344 each contribute to the [CaMn4O5] cluster site. The propeptide occupies 345–352; that stretch reads SVEAPVVG.

It belongs to the reaction center PufL/M/PsbA/D family. PSII is composed of 1 copy each of membrane proteins PsbA, PsbB, PsbC, PsbD, PsbE, PsbF, PsbH, PsbI, PsbJ, PsbK, PsbL, PsbM, PsbT, PsbX, PsbY, PsbZ, Psb30/Ycf12, at least 3 peripheral proteins of the oxygen-evolving complex and a large number of cofactors. It forms dimeric complexes. The D1/D2 heterodimer binds P680, chlorophylls that are the primary electron donor of PSII, and subsequent electron acceptors. It shares a non-heme iron and each subunit binds pheophytin, quinone, additional chlorophylls, carotenoids and lipids. D1 provides most of the ligands for the Mn4-Ca-O5 cluster of the oxygen-evolving complex (OEC). There is also a Cl(-1) ion associated with D1 and D2, which is required for oxygen evolution. The PSII complex binds additional chlorophylls, carotenoids and specific lipids. is required as a cofactor. In terms of processing, tyr-161 forms a radical intermediate that is referred to as redox-active TyrZ, YZ or Y-Z. Post-translationally, C-terminally processed by CTPA; processing is essential to allow assembly of the oxygen-evolving complex and thus photosynthetic growth.

The protein resides in the plastid. Its subcellular location is the chloroplast thylakoid membrane. It catalyses the reaction 2 a plastoquinone + 4 hnu + 2 H2O = 2 a plastoquinol + O2. In terms of biological role, photosystem II (PSII) is a light-driven water:plastoquinone oxidoreductase that uses light energy to abstract electrons from H(2)O, generating O(2) and a proton gradient subsequently used for ATP formation. It consists of a core antenna complex that captures photons, and an electron transfer chain that converts photonic excitation into a charge separation. The D1/D2 (PsbA/PsbD) reaction center heterodimer binds P680, the primary electron donor of PSII as well as several subsequent electron acceptors. The chain is Photosystem II protein D1 from Zygnema circumcarinatum (Green alga).